The sequence spans 120 residues: Nitrogen regulatory protein GlnK1 (120 aa).

ADP-binding positions include threonine 40, 48–50 (GEQ), valine 75, and 98–101 (GDGR). Residues threonine 40, 48–50 (GEQ), valine 75, and 98–101 (GDGR) contribute to the ATP site.

It belongs to the P(II) protein family. Homotrimer. Interacts and forms a complex with Amt1.

It is found in the cytoplasm. Its function is as follows. Involved in the regulation of nitrogen metabolism. Regulates the activity of its targets by protein-protein interaction in response to the nitrogen status of the cell. Regulates the activity of the ammonia channel Amt1 via direct interaction. This chain is Nitrogen regulatory protein GlnK1, found in Archaeoglobus fulgidus (strain ATCC 49558 / DSM 4304 / JCM 9628 / NBRC 100126 / VC-16).